The sequence spans 169 residues: Cytochrome c-type biogenesis protein CcmE (169 aa).

Residues 1-7 are Cytoplasmic-facing; it reads MTRKSRR. Residues 8 to 28 traverse the membrane as a helical; Signal-anchor for type II membrane protein segment; the sequence is LILIAACGAVLALALGLILSA. The Periplasmic segment spans residues 29-169; it reads MSGSIVFFRS…DATLGQRSER (141 aa). The heme site is built by histidine 122 and tyrosine 126. A disordered region spans residues 135 to 169; that stretch reads LKAQGRWQEGGGKEAPKDAAKPASADATLGQRSER. Residues 145-154 are compositionally biased toward basic and acidic residues; it reads GGKEAPKDAA.

The protein belongs to the CcmE/CycJ family.

It is found in the cell inner membrane. Heme chaperone required for the biogenesis of c-type cytochromes. Transiently binds heme delivered by CcmC and transfers the heme to apo-cytochromes in a process facilitated by CcmF and CcmH. The protein is Cytochrome c-type biogenesis protein CcmE of Methylorubrum populi (strain ATCC BAA-705 / NCIMB 13946 / BJ001) (Methylobacterium populi).